The chain runs to 368 residues: MSTILLNLDFGQPSKKAFGGNAKHQRFVKKRRFLEQKGFLNKKNQPPNKVSKLNSEPPKKGETSRVDGILKILPCPKKKEAAASKRDSERSKDKKAPLSWLTPAPSKKTASVVSKIDLLGEFQSALPKTKSTQKKGSKKKSLKKKIATENSTQAQSKDKGSKKKPLKKNAVPNSTQARSEDKCPTVPQNLPGKMVAIDCEMVGTGPKGRVSSLARCSIVNYNGDVLYDEYVLPPCYIVNYRTRWSGIRKCHMVNATPFKTARSQILKILSGKVVIGHAIHNDYKALQYFHPKSLTRDTSRIPLLNRKADCPENVTLSLKHLTKKLLSRDIQVGNTGHSSVEDAQATMELYKLVEVEWEQHLAQNPPEN.

Disordered stretches follow at residues 33-107 and 127-187; these read FLEQ…APSK and PKTK…PTVP. The span at 42 to 54 shows a compositional bias: polar residues; it reads KKNQPPNKVSKLN. A compositionally biased stretch (basic and acidic residues) spans 77–96; sequence KKKEAAASKRDSERSKDKKA. Over residues 131-145 the composition is skewed to basic residues; the sequence is STQKKGSKKKSLKKK. The Exonuclease domain occupies 194–368; that stretch reads MVAIDCEMVG…QHLAQNPPEN (175 aa).

The protein resides in the nucleus. The protein localises to the nucleolus. 3'-&gt; 5'-exoribonuclease involved in ribosome biogenesis in the processing of the 12S pre-rRNA. Displays a strong specificity for a 3'-end containing a free hydroxyl group. This Mus musculus (Mouse) protein is Interferon-stimulated 20 kDa exonuclease-like 2 (Isg20l2).